Here is a 122-residue protein sequence, read N- to C-terminus: Small ribosomal subunit protein bS6 (122 aa).

Belongs to the bacterial ribosomal protein bS6 family.

In terms of biological role, binds together with bS18 to 16S ribosomal RNA. The sequence is that of Small ribosomal subunit protein bS6 (rpsF) from Neisseria meningitidis serogroup B (strain ATCC BAA-335 / MC58).